The primary structure comprises 466 residues: Uronate isomerase (466 aa).

The protein belongs to the metallo-dependent hydrolases superfamily. Uronate isomerase family.

The enzyme catalyses D-glucuronate = D-fructuronate. The catalysed reaction is aldehydo-D-galacturonate = keto-D-tagaturonate. Its pathway is carbohydrate metabolism; pentose and glucuronate interconversion. This is Uronate isomerase from Brucella suis (strain ATCC 23445 / NCTC 10510).